A 383-amino-acid chain; its full sequence is F-box/kelch-repeat protein At4g19330 (383 aa).

A disordered region spans residues 1 to 27 (MAYLSFKSNMERTPRESNTPCPPPQPS). The 52-residue stretch at 28 to 79 (PSLFSSLPDDIVLNILARISTSYYQTLSLVSKTFRLLILSKELDMERSYLGT) folds into the F-box domain. Kelch repeat units follow at residues 147–192 (ETYE…VLDG), 193–239 (KLYV…NIQT), and 272–318 (STCE…SEIG).

In terms of biological role, involved in seed germination. The sequence is that of F-box/kelch-repeat protein At4g19330 from Arabidopsis thaliana (Mouse-ear cress).